We begin with the raw amino-acid sequence, 245 residues long: Probable phosphatase ECA2529 (245 aa).

Zn(2+)-binding residues include H7, H9, H15, H40, E73, H101, H131, D192, and H194.

The protein belongs to the PHP family. As to quaternary structure, homotrimer. It depends on Zn(2+) as a cofactor.

This Pectobacterium atrosepticum (strain SCRI 1043 / ATCC BAA-672) (Erwinia carotovora subsp. atroseptica) protein is Probable phosphatase ECA2529.